The sequence spans 737 residues: Polyribonucleotide nucleotidyltransferase (737 aa).

Positions 489 and 495 each coordinate Mg(2+). One can recognise a KH domain in the interval Pro556 to Ile615. An S1 motif domain is found at Asp625–Lys693. The disordered stretch occupies residues Ser691 to Glu737. The segment covering Pro700–Pro714 has biased composition (basic and acidic residues). The segment covering His715–Lys724 has biased composition (basic residues). Positions Pro725–Glu737 are enriched in basic and acidic residues.

This sequence belongs to the polyribonucleotide nucleotidyltransferase family. Requires Mg(2+) as cofactor.

The protein localises to the cytoplasm. It catalyses the reaction RNA(n+1) + phosphate = RNA(n) + a ribonucleoside 5'-diphosphate. Its function is as follows. Involved in mRNA degradation. Catalyzes the phosphorolysis of single-stranded polyribonucleotides processively in the 3'- to 5'-direction. This is Polyribonucleotide nucleotidyltransferase from Streptococcus pneumoniae (strain Taiwan19F-14).